The primary structure comprises 88 residues: FXYD domain-containing ion transport regulator 3 (88 aa).

Positions 1–20 (MQEFALSLLVLLAGLPTLDA) are cleaved as a signal peptide. The Extracellular portion of the chain corresponds to 21–38 (NDPEDKDSPFYYDWHSLR). The helical transmembrane segment at 39-59 (VGGLICAGILCALGIIVLMSG) threads the bilayer. At 60 to 88 (KCKCKFSQKPSHRPGDGPPLITPGSAHNC) the chain is on the cytoplasmic side. The tract at residues 66-88 (SQKPSHRPGDGPPLITPGSAHNC) is disordered.

The protein belongs to the FXYD family. Regulatory subunit of the sodium/potassium-transporting ATPase which is composed of a catalytic alpha subunit, a non-catalytic beta subunit and an additional regulatory subunit. Interacts with catalytic alpha subunit ATP1A1. Also interacts with non-catalytic beta subunit ATP1B1. Interacts with the alpha1-beta1, alpha2-beta1 and alpha3-beta1 NKA isozymes. Post-translationally, glutathionylated.

The protein resides in the cell membrane. In terms of biological role, associates with and regulates the activity of the sodium/potassium-transporting ATPase (NKA) which transports Na(+) out of the cell and K(+) into the cell. Reduces glutathionylation of the NKA beta-1 subunit ATP1B1, thus reversing glutathionylation-mediated inhibition of ATP1B1. Induces a hyperpolarization-activated chloride current when expressed in Xenopus oocytes. This is FXYD domain-containing ion transport regulator 3 (Fxyd3) from Rattus norvegicus (Rat).